We begin with the raw amino-acid sequence, 682 residues long: Potassium-transporting ATPase ATP-binding subunit (682 aa).

Transmembrane regions (helical) follow at residues P34–A54, A62–A82, I219–L239, and V254–I274. The active-site 4-aspartylphosphate intermediate is D307. ATP-binding positions include D344, E348, F377 to S384, and K395. Residues D518 and D522 each contribute to the Mg(2+) site. Transmembrane regions (helical) follow at residues F588–M608, A616–L636, and I656–L676.

Belongs to the cation transport ATPase (P-type) (TC 3.A.3) family. Type IA subfamily. As to quaternary structure, the system is composed of three essential subunits: KdpA, KdpB and KdpC.

The protein resides in the cell inner membrane. It catalyses the reaction K(+)(out) + ATP + H2O = K(+)(in) + ADP + phosphate + H(+). Functionally, part of the high-affinity ATP-driven potassium transport (or Kdp) system, which catalyzes the hydrolysis of ATP coupled with the electrogenic transport of potassium into the cytoplasm. This subunit is responsible for energy coupling to the transport system and for the release of the potassium ions to the cytoplasm. The chain is Potassium-transporting ATPase ATP-binding subunit from Shigella boydii serotype 4 (strain Sb227).